A 376-amino-acid polypeptide reads, in one-letter code: 26S proteasome non-ATPase regulatory subunit 13 (376 aa).

The region spanning 171 to 338 (SYYKDALRFL…KRVHMTWVQP (168 aa)) is the PCI domain. Lys-298 is subject to N6-acetyllysine.

It belongs to the proteasome subunit S11 family. In terms of assembly, component of the 19S proteasome regulatory particle complex. The 26S proteasome consists of a 20S core particle (CP) and two 19S regulatory subunits (RP). The regulatory particle is made of a lid composed of 9 subunits including PSMD13, a base containing 6 ATPases and few additional components.

Functionally, component of the 26S proteasome, a multiprotein complex involved in the ATP-dependent degradation of ubiquitinated proteins. This complex plays a key role in the maintenance of protein homeostasis by removing misfolded or damaged proteins, which could impair cellular functions, and by removing proteins whose functions are no longer required. Therefore, the proteasome participates in numerous cellular processes, including cell cycle progression, apoptosis, or DNA damage repair. This Mus musculus (Mouse) protein is 26S proteasome non-ATPase regulatory subunit 13 (Psmd13).